Here is a 503-residue protein sequence, read N- to C-terminus: MVLEMLNPMYYKITSMVSEVVPFASIAVLLLTGFLLLLWNYENTSSIPSPGYFLGIGPLISHFRFLWMGIGSACNYYNEMYGEFMRVWIGGEETLIISKSSSVFHVMKHSHYTSRFGSKPGLECIGMYEKGIIFNNDPALWKAVRTYFMKALSGPGLVRMVTVCADSITKHLDKLEEVRNDLGYVDVLTLMRRIMLDTSNNLFLGIPLDEKAIVCKIQGYFDAWQALLLKPEFFFKFSWLYKKHKESVKDLKENMEILIEKKRCSIITAEKLEDCMDFATELILAEKRGELTKENVNQCILEMLIAAPDTLSVTVFFMLFLIAKHPQVEEAIVKEIQTVIGERDIRNDDMQKLKVVENFIYESMRYQPVVDLVMRKALEDDVIDGYPVKKGTNIILNIGRMHRLEFFPKPNEFTLENFAKNVPYRYFQPFGFGPRACAGKYIAMVMMKVTLVILLRRFQVQTPQDRCVEKMQKKNDLSLHPDETSGLLEMIFIPRNSDKSLDH.

C437 provides a ligand contact to heme.

It belongs to the cytochrome P450 family. Heme serves as cofactor.

Its subcellular location is the membrane. The enzyme catalyses testosterone + 3 reduced [NADPH--hemoprotein reductase] + 3 O2 = 17beta-estradiol + formate + 3 oxidized [NADPH--hemoprotein reductase] + 4 H2O + 4 H(+). It carries out the reaction androst-4-ene-3,17-dione + 3 reduced [NADPH--hemoprotein reductase] + 3 O2 = estrone + formate + 3 oxidized [NADPH--hemoprotein reductase] + 4 H2O + 4 H(+). Catalyzes the formation of aromatic C18 estrogens from C19 androgens. This Sus scrofa (Pig) protein is Aromatase 2 (CYP19A2).